Here is a 249-residue protein sequence, read N- to C-terminus: General transcription factor IIF subunit 2 (249 aa).

At Ala2 the chain carries N-acetylalanine. 3 positions are modified to N6-acetyllysine: Lys22, Lys33, and Lys137. Ser142 is modified (phosphoserine). Positions 227 and 229 each coordinate DNA. Ser248 carries the post-translational modification Phosphoserine.

The protein belongs to the TFIIF beta subunit family. Heterodimer of an alpha and a beta subunit. Interacts with HTATSF1 and GPBP1. Interacts with URI1. Interacts with GTF2B (via N-terminus); this interaction is inhibited in presence of GTF2F1. Part of TBP-based Pol II pre-initiation complex (PIC), in which Pol II core assembles with general transcription factors and other specific initiation factors including GTF2E1, GTF2E2, GTF2F1, GTF2F2, TCEA1, ERCC2, ERCC3, GTF2H2, GTF2H3, GTF2H4, GTF2H5, GTF2A1, GTF2A2, GTF2B and TBP; this large multi-subunit PIC complex mediates DNA unwinding and targets Pol II core to the transcription start site where the first phosphodiester bond forms.

The protein resides in the nucleus. In terms of biological role, TFIIF is a general transcription initiation factor that binds to RNA polymerase II and helps to recruit it to the initiation complex in collaboration with TFIIB. In Bos taurus (Bovine), this protein is General transcription factor IIF subunit 2 (GTF2F2).